A 79-amino-acid chain; its full sequence is D-alanyl carrier protein (79 aa).

Positions 1–77 (MDVKETILNI…KIISGVVELM (77 aa)) constitute a Carrier domain. Ser-35 is subject to O-(pantetheine 4'-phosphoryl)serine.

Belongs to the DltC family. Post-translationally, 4'-phosphopantetheine is transferred from CoA to a specific serine of apo-DCP.

It is found in the cytoplasm. Its pathway is cell wall biogenesis; lipoteichoic acid biosynthesis. Its function is as follows. Carrier protein involved in the D-alanylation of lipoteichoic acid (LTA). The loading of thioester-linked D-alanine onto DltC is catalyzed by D-alanine--D-alanyl carrier protein ligase DltA. The DltC-carried D-alanyl group is further transferred to cell membrane phosphatidylglycerol (PG) by forming an ester bond, probably catalyzed by DltD. D-alanylation of LTA plays an important role in modulating the properties of the cell wall in Gram-positive bacteria, influencing the net charge of the cell wall. This is D-alanyl carrier protein from Streptococcus suis (strain 05ZYH33).